Reading from the N-terminus, the 197-residue chain is 3-isopropylmalate dehydratase small subunit (197 aa).

The protein belongs to the LeuD family. LeuD type 1 subfamily. Heterodimer of LeuC and LeuD.

The catalysed reaction is (2R,3S)-3-isopropylmalate = (2S)-2-isopropylmalate. It participates in amino-acid biosynthesis; L-leucine biosynthesis; L-leucine from 3-methyl-2-oxobutanoate: step 2/4. In terms of biological role, catalyzes the isomerization between 2-isopropylmalate and 3-isopropylmalate, via the formation of 2-isopropylmaleate. The sequence is that of 3-isopropylmalate dehydratase small subunit from Shouchella clausii (strain KSM-K16) (Alkalihalobacillus clausii).